The sequence spans 103 residues: Phosphoribosyl-ATP pyrophosphatase (103 aa).

A disordered region spans residues 84–103; sequence LQSREGKLSKTSDRKEINDL.

The protein belongs to the PRA-PH family.

The protein resides in the cytoplasm. It catalyses the reaction 1-(5-phospho-beta-D-ribosyl)-ATP + H2O = 1-(5-phospho-beta-D-ribosyl)-5'-AMP + diphosphate + H(+). It participates in amino-acid biosynthesis; L-histidine biosynthesis; L-histidine from 5-phospho-alpha-D-ribose 1-diphosphate: step 2/9. In Listeria innocua serovar 6a (strain ATCC BAA-680 / CLIP 11262), this protein is Phosphoribosyl-ATP pyrophosphatase (hisE).